Reading from the N-terminus, the 145-residue chain is Glycine-rich protein (145 aa).

Positions 1–19 (MKLTLAVVVVFAYIATTNA) are cleaved as a signal peptide.

As to expression, component of the acid-insoluble and acid-soluble organic matrix of calcified layers of the shell (at protein level).

It localises to the secreted. The chain is Glycine-rich protein from Lottia gigantea (Giant owl limpet).